The chain runs to 309 residues: Polyprenal reductase (309 aa).

7 helical membrane passes run L12–I32, F72–Y92, I114–A134, M151–M171, L184–I204, L242–I262, and F270–Y290.

The protein belongs to the steroid 5-alpha reductase family. Polyprenal reductase subfamily.

It localises to the endoplasmic reticulum membrane. The enzyme catalyses a di-trans,poly-cis-dolichal + NADP(+) = a di-trans,poly-cis-polyprenal + NADPH + H(+). It functions in the pathway protein modification; protein glycosylation. Its function is as follows. Plays a key role in early steps of protein N-linked glycosylation by being involved in the conversion of polyprenol into dolichol. Acts as a polyprenal reductase that mediates the reduction of polyprenal into dolichal in a NADP-dependent mechanism. Dolichols are required for the synthesis of dolichol-linked monosaccharides and the oligosaccharide precursor used for N-glycosylation. This is Polyprenal reductase from Caenorhabditis elegans.